Consider the following 159-residue polypeptide: Transcriptional repressor NrdR (159 aa).

Residues 3–34 (CPFCRHDDTQVVDSRVSEDGAAIRRRRRCSAC) fold into a zinc finger. The ATP-cone domain maps to 49–139 (PAVVKKDGSR…VYRRFEDVSE (91 aa)).

It belongs to the NrdR family. The cofactor is Zn(2+).

Negatively regulates transcription of bacterial ribonucleotide reductase nrd genes and operons by binding to NrdR-boxes. The sequence is that of Transcriptional repressor NrdR from Burkholderia cenocepacia (strain HI2424).